The chain runs to 318 residues: NADH-ubiquinone oxidoreductase chain 1 (318 aa).

8 helical membrane-spanning segments follow: residues 2 to 22 (FLTN…FLTL), 70 to 90 (MFLM…IPLP), 102 to 122 (LLFM…SGWA), 147 to 167 (AIIL…TLII), 171 to 191 (YMWL…STLA), 222 to 242 (LFFL…TILF), 253 to 273 (ELYT…FLWI), and 294 to 314 (LPLT…TAAI).

It belongs to the complex I subunit 1 family.

It localises to the mitochondrion inner membrane. It catalyses the reaction a ubiquinone + NADH + 5 H(+)(in) = a ubiquinol + NAD(+) + 4 H(+)(out). Its function is as follows. Core subunit of the mitochondrial membrane respiratory chain NADH dehydrogenase (Complex I) that is believed to belong to the minimal assembly required for catalysis. Complex I functions in the transfer of electrons from NADH to the respiratory chain. The immediate electron acceptor for the enzyme is believed to be ubiquinone. In Diaemus youngi (White-winged vampire bat), this protein is NADH-ubiquinone oxidoreductase chain 1 (MT-ND1).